A 548-amino-acid chain; its full sequence is Membrane protein insertase YidC (548 aa).

The helical transmembrane segment at 6–26 threads the bilayer; sequence NLLVIALLFVSFMIWQAWEQD. The interval 28–54 is disordered; it reads NPQPQTQQTTQTTTTAAGSAADQGVPA. A compositionally biased stretch (low complexity) spans 29-42; sequence PQPQTQQTTQTTTT. The next 4 membrane-spanning stretches (helical) occupy residues 350 to 370, 424 to 444, 458 to 478, and 499 to 519; these read FLGNWGFSIIVITFIVRGIMY, FPLIIQMPIFLALYYMLMGSI, LSAQDPYYILPILMGVTMFFI, and PVIFTVFFLWFPSGLVLYYIV.

It belongs to the OXA1/ALB3/YidC family. Type 1 subfamily. In terms of assembly, interacts with the Sec translocase complex via SecD. Specifically interacts with transmembrane segments of nascent integral membrane proteins during membrane integration.

Its subcellular location is the cell inner membrane. Its function is as follows. Required for the insertion and/or proper folding and/or complex formation of integral membrane proteins into the membrane. Involved in integration of membrane proteins that insert both dependently and independently of the Sec translocase complex, as well as at least some lipoproteins. Aids folding of multispanning membrane proteins. This Citrobacter koseri (strain ATCC BAA-895 / CDC 4225-83 / SGSC4696) protein is Membrane protein insertase YidC.